The sequence spans 79 residues: Conotoxin ArMKLT2-031 (79 aa).

A signal peptide spans 1–22 (MKLTCVLIIAVLFLTACQLTTG). Residues 23-46 (ETYSRGEQKDHALRSTDKNSKLTR) constitute a propeptide that is removed on maturation. A Pyrrolidone carboxylic acid modification is found at Gln-47. Cystine bridges form between Cys-48-Cys-62, Cys-55-Cys-66, and Cys-61-Cys-73.

The protein belongs to the conotoxin O1 superfamily. As to expression, expressed by the venom duct.

The protein resides in the secreted. The chain is Conotoxin ArMKLT2-031 from Conus arenatus (Sand-dusted cone).